Reading from the N-terminus, the 292-residue chain is Acetylglutamate kinase (292 aa).

Substrate-binding positions include 64-65, Arg-86, and Asn-190; that span reads GG.

It belongs to the acetylglutamate kinase family. ArgB subfamily.

The protein localises to the cytoplasm. The catalysed reaction is N-acetyl-L-glutamate + ATP = N-acetyl-L-glutamyl 5-phosphate + ADP. It functions in the pathway amino-acid biosynthesis; L-arginine biosynthesis; N(2)-acetyl-L-ornithine from L-glutamate: step 2/4. Functionally, catalyzes the ATP-dependent phosphorylation of N-acetyl-L-glutamate. This chain is Acetylglutamate kinase, found in Geobacter metallireducens (strain ATCC 53774 / DSM 7210 / GS-15).